Here is a 181-residue protein sequence, read N- to C-terminus: Translation initiation factor IF-3 (181 aa).

The protein belongs to the IF-3 family. As to quaternary structure, monomer.

It is found in the cytoplasm. In terms of biological role, IF-3 binds to the 30S ribosomal subunit and shifts the equilibrium between 70S ribosomes and their 50S and 30S subunits in favor of the free subunits, thus enhancing the availability of 30S subunits on which protein synthesis initiation begins. The polypeptide is Translation initiation factor IF-3 (Idiomarina loihiensis (strain ATCC BAA-735 / DSM 15497 / L2-TR)).